Here is a 256-residue protein sequence, read N- to C-terminus: Pimeloyl-[acyl-carrier protein] methyl ester esterase (256 aa).

In terms of domain architecture, AB hydrolase-1 spans 15 to 242 (HLVLLHGWGL…AAHAPFISHP (228 aa)). Substrate is bound by residues Trp-22, 82–83 (SL), and 143–147 (FLALQ). Ser-82 serves as the catalytic Nucleophile. Residues Asp-207 and His-235 contribute to the active site. His-235 is a substrate binding site.

It belongs to the AB hydrolase superfamily. Carboxylesterase BioH family. In terms of assembly, monomer.

The protein resides in the cytoplasm. It carries out the reaction 6-carboxyhexanoyl-[ACP] methyl ester + H2O = 6-carboxyhexanoyl-[ACP] + methanol + H(+). It functions in the pathway cofactor biosynthesis; biotin biosynthesis. Its function is as follows. The physiological role of BioH is to remove the methyl group introduced by BioC when the pimeloyl moiety is complete. It allows to synthesize pimeloyl-ACP via the fatty acid synthetic pathway through the hydrolysis of the ester bonds of pimeloyl-ACP esters. This chain is Pimeloyl-[acyl-carrier protein] methyl ester esterase, found in Citrobacter koseri (strain ATCC BAA-895 / CDC 4225-83 / SGSC4696).